A 693-amino-acid polypeptide reads, in one-letter code: Polyribonucleotide nucleotidyltransferase (693 aa).

The Mg(2+) site is built by aspartate 489 and aspartate 495. The 60-residue stretch at 556–615 (PQIHVMNINPAKIKDVVGRGGATVKGIVEKTGAQIDTSDSGEVKVFAKDKKSMDMAVAMI) folds into the KH domain. The S1 motif domain occupies 625–693 (GQVYKGKIVK…GRVKLSLVAR (69 aa)).

This sequence belongs to the polyribonucleotide nucleotidyltransferase family. Component of the RNA degradosome, which is a multiprotein complex involved in RNA processing and mRNA degradation. Mg(2+) serves as cofactor.

It localises to the cytoplasm. The catalysed reaction is RNA(n+1) + phosphate = RNA(n) + a ribonucleoside 5'-diphosphate. Its function is as follows. Involved in mRNA degradation. Catalyzes the phosphorolysis of single-stranded polyribonucleotides processively in the 3'- to 5'-direction. The protein is Polyribonucleotide nucleotidyltransferase of Francisella tularensis subsp. holarctica (strain FTNF002-00 / FTA).